Consider the following 235-residue polypeptide: Large ribosomal subunit protein uL4 (235 aa).

A disordered region spans residues 45–75; that stretch reads RAGTASTKTRGEVSGGGRKPWPQKHTGRARH. The segment covering 65–75 has biased composition (basic residues); it reads WPQKHTGRARH.

It belongs to the universal ribosomal protein uL4 family. In terms of assembly, part of the 50S ribosomal subunit.

In terms of biological role, one of the primary rRNA binding proteins, this protein initially binds near the 5'-end of the 23S rRNA. It is important during the early stages of 50S assembly. It makes multiple contacts with different domains of the 23S rRNA in the assembled 50S subunit and ribosome. Its function is as follows. Forms part of the polypeptide exit tunnel. This Thermotoga petrophila (strain ATCC BAA-488 / DSM 13995 / JCM 10881 / RKU-1) protein is Large ribosomal subunit protein uL4.